The primary structure comprises 366 residues: Uroporphyrinogen decarboxylase (366 aa).

Residues 28 to 32 (RQAGR), aspartate 78, tyrosine 160, threonine 215, and histidine 333 contribute to the substrate site.

It belongs to the uroporphyrinogen decarboxylase family. As to quaternary structure, homodimer.

The protein localises to the cytoplasm. It catalyses the reaction uroporphyrinogen III + 4 H(+) = coproporphyrinogen III + 4 CO2. It participates in porphyrin-containing compound metabolism; protoporphyrin-IX biosynthesis; coproporphyrinogen-III from 5-aminolevulinate: step 4/4. In terms of biological role, catalyzes the decarboxylation of four acetate groups of uroporphyrinogen-III to yield coproporphyrinogen-III. The chain is Uroporphyrinogen decarboxylase from Paraburkholderia phytofirmans (strain DSM 17436 / LMG 22146 / PsJN) (Burkholderia phytofirmans).